Consider the following 377-residue polypeptide: Dihydroorotate dehydrogenase (quinone) (377 aa).

Residues A82–K86 and T106 contribute to the FMN site. Residue K86 coordinates substrate. N131 to F135 provides a ligand contact to substrate. N159 and N192 together coordinate FMN. Residue N192 participates in substrate binding. The active-site Nucleophile is the S195. Residue N197 participates in substrate binding. The FMN site is built by K228 and T256. N257–T258 is a binding site for substrate. FMN contacts are provided by residues G282, G311, and Y332–T333.

It belongs to the dihydroorotate dehydrogenase family. Type 2 subfamily. Monomer. The cofactor is FMN.

The protein localises to the cell membrane. It carries out the reaction (S)-dihydroorotate + a quinone = orotate + a quinol. Its pathway is pyrimidine metabolism; UMP biosynthesis via de novo pathway; orotate from (S)-dihydroorotate (quinone route): step 1/1. Catalyzes the conversion of dihydroorotate to orotate with quinone as electron acceptor. In Corynebacterium efficiens (strain DSM 44549 / YS-314 / AJ 12310 / JCM 11189 / NBRC 100395), this protein is Dihydroorotate dehydrogenase (quinone).